Consider the following 257-residue polypeptide: UPF0758 protein Bcenmc03_2526 (257 aa).

The segment at 1-53 (MLSPCPILPSAECRDTADTPADPPGRVIPINRRRRRPGDWRPERPRERLLERG) is disordered. The span at 37 to 51 (PGDWRPERPRERLLE) shows a compositional bias: basic and acidic residues. One can recognise an MPN domain in the interval 135–257 (QIDSPGAVED…TFSFARAGWL (123 aa)). Positions 206, 208, and 219 each coordinate Zn(2+). A JAMM motif motif is present at residues 206-219 (HNHPSGAVQPSAED).

This sequence belongs to the UPF0758 family.

In Burkholderia orbicola (strain MC0-3), this protein is UPF0758 protein Bcenmc03_2526.